The sequence spans 640 residues: Threonine--tRNA ligase (640 aa).

The 61-residue stretch at 1–61 (MPTITLPDGS…DSDATLQIIT (61 aa)) folds into the TGS domain. The segment at 242-533 (DHRKIGKRLG…LIEHYEGAFP (292 aa)) is catalytic. Residues Cys333, His384, and His510 each contribute to the Zn(2+) site.

The protein belongs to the class-II aminoacyl-tRNA synthetase family. As to quaternary structure, homodimer. Requires Zn(2+) as cofactor.

Its subcellular location is the cytoplasm. It catalyses the reaction tRNA(Thr) + L-threonine + ATP = L-threonyl-tRNA(Thr) + AMP + diphosphate + H(+). Its function is as follows. Catalyzes the attachment of threonine to tRNA(Thr) in a two-step reaction: L-threonine is first activated by ATP to form Thr-AMP and then transferred to the acceptor end of tRNA(Thr). Also edits incorrectly charged L-seryl-tRNA(Thr). This chain is Threonine--tRNA ligase, found in Pseudomonas fluorescens (strain Pf0-1).